Reading from the N-terminus, the 176-residue chain is 3-hydroxyanthranilate 3,4-dioxygenase (176 aa).

Arginine 44 lines the O2 pocket. The Fe cation site is built by histidine 48, glutamate 54, and histidine 92. Residue glutamate 54 coordinates substrate. 2 residues coordinate substrate: arginine 96 and glutamate 106. 4 residues coordinate Fe cation: cysteine 121, cysteine 124, cysteine 158, and cysteine 161.

The protein belongs to the 3-HAO family. Homodimer. Fe(2+) is required as a cofactor.

It catalyses the reaction 3-hydroxyanthranilate + O2 = (2Z,4Z)-2-amino-3-carboxymuconate 6-semialdehyde. Its pathway is cofactor biosynthesis; NAD(+) biosynthesis; quinolinate from L-kynurenine: step 3/3. In terms of biological role, catalyzes the oxidative ring opening of 3-hydroxyanthranilate to 2-amino-3-carboxymuconate semialdehyde, which spontaneously cyclizes to quinolinate. The polypeptide is 3-hydroxyanthranilate 3,4-dioxygenase (Xanthomonas campestris pv. campestris (strain 8004)).